An 852-amino-acid chain; its full sequence is Carbohydrate-responsive element-binding protein (852 aa).

Residues 1–12 (MAGALAGLAAGL) are compositionally biased toward low complexity. Disordered regions lie at residues 1–36 (MAGA…SLRR) and 54–80 (VSSP…FGPR). Ser20, Ser23, and Ser25 each carry phosphoserine. Thr27 carries the post-translational modification Phosphothreonine. A Phosphoserine modification is found at Ser29. Ser196 is modified (phosphoserine). Disordered stretches follow at residues 328–365 (DSLF…CPGP), 486–527 (PCFS…NNPC), and 548–648 (STLL…NKTE). The segment covering 505-521 (ASPPTLAPATASPPTTA) has biased composition (low complexity). Residues 548-559 (STLLRSPGSPQE) show a composition bias toward polar residues. Ser556 carries the phosphoserine; by AMPK modification. Residues 568 to 584 (FLPPTPAPTPPRPPPGP) are compositionally biased toward pro residues. Phosphoserine is present on residues Ser602, Ser614, and Ser631. The bHLH domain occupies 649–703 (NRRITHISAEQKRRFNIKLGFDTLHGLVSTLSAQPSLKVSKATTLQKTAEYILML). Residues 703–724 (LQQERAGLQEEAQQLRDEIEEL) form a leucine-zipper region.

As to quaternary structure, binds DNA as a heterodimer with MLX/TCFL4. In terms of processing, phosphorylation at Ser-556 by AMPK inactivates the DNA-binding activity. In terms of tissue distribution, expressed in liver, heart, kidney, cerebellum and intestinal tissues.

The protein localises to the nucleus. In terms of biological role, binds DNA as a heterodimer with MLX/TCFL4 and activates transcription. Binds to the canonical E box sequence 5'-CACGTG-3'. Plays a role in transcriptional activation of glycolytic target genes. Involved in glucose-responsive gene regulation. Regulates transcription in response to changes in cellular carbohydrate abundance such as occurs during fasting to feeding metabolic transition. Refeeding stimulates MLXIPL/ChREBP transcription factor, leading to increased BCKDK to PPM1K expression ratio, phosphorylation and activation of ACLY that ultimately results in the generation of malonyl-CoA and oxaloacetate immediate substrates of de novo lipogenesis and gluconeogenesis, respectively. The protein is Carbohydrate-responsive element-binding protein (MLXIPL) of Homo sapiens (Human).